Here is a 271-residue protein sequence, read N- to C-terminus: Virulence regulon transcriptional activator VirF (271 aa).

The 99-residue stretch at 167–265 folds into the HTH araC/xylS-type domain; sequence ERLQKFMEEN…GCTPSQARLT (99 aa). 2 DNA-binding regions (H-T-H motif) span residues 184 to 205 and 232 to 255; these read SKFA…GTVY and IVDI…RRRF.

In terms of biological role, transcriptional activator of the Yersinia virulence regulon. This Yersinia enterocolitica serotype O:8 / biotype 1B (strain NCTC 13174 / 8081) protein is Virulence regulon transcriptional activator VirF (virF).